We begin with the raw amino-acid sequence, 168 residues long: G/U mismatch-specific DNA glycosylase (168 aa).

The protein belongs to the uracil-DNA glycosylase (UDG) superfamily. TDG/mug family. In terms of assembly, binds DNA as a monomer.

The protein resides in the cytoplasm. The catalysed reaction is Specifically hydrolyzes mismatched double-stranded DNA and polynucleotides, releasing free uracil.. Excises ethenocytosine and uracil, which can arise by alkylation or deamination of cytosine, respectively, from the corresponding mispairs with guanine in ds-DNA. It is capable of hydrolyzing the carbon-nitrogen bond between the sugar-phosphate backbone of the DNA and the mispaired base. The complementary strand guanine functions in substrate recognition. Required for DNA damage lesion repair in stationary-phase cells. This chain is G/U mismatch-specific DNA glycosylase, found in Shigella dysenteriae serotype 1 (strain Sd197).